The sequence spans 346 residues: Phosphoribosylformylglycinamidine cyclo-ligase (346 aa).

This sequence belongs to the AIR synthase family.

The protein localises to the cytoplasm. The catalysed reaction is 2-formamido-N(1)-(5-O-phospho-beta-D-ribosyl)acetamidine + ATP = 5-amino-1-(5-phospho-beta-D-ribosyl)imidazole + ADP + phosphate + H(+). Its pathway is purine metabolism; IMP biosynthesis via de novo pathway; 5-amino-1-(5-phospho-D-ribosyl)imidazole from N(2)-formyl-N(1)-(5-phospho-D-ribosyl)glycinamide: step 2/2. The sequence is that of Phosphoribosylformylglycinamidine cyclo-ligase from Bacillus velezensis (strain DSM 23117 / BGSC 10A6 / LMG 26770 / FZB42) (Bacillus amyloliquefaciens subsp. plantarum).